Consider the following 420-residue polypeptide: MGLVQEEGSGPVHGFRLSTVSASLPSETGTTHEPTGLDLAMKLHYLKAVYIYSAGTARDLTVMDVKAPLFSVFYQIPCIIGRFRRHESGRPYLKCNDCGTRFVESHCDLTVEEWLRVPDRSVDESLVYHQPVGPDLAFSPLLYIQMTRFSCGGLALGLSWAHIMGDPFSLSHFFNLWAQAFAGGKIYCPKTSVTERDFQNPTSTFKKPDSVKQVDLVGDLWVAPNNSKMTTFSFNLTVNDLKTHFPVNGDGEFEILTGIIWKCVATVRGESAPVTITVIRSDPKKLKPRAVRNGQMISSIHVDFSVAEASLEEIVKSIGEAKDERVVIDEIVDDVSDFIVYGANLTFVDMSEVDFYEAKVMGKSPESVYCNVQGIGDDGAVVVLPGVVEEERVVTVTLPVDEIEKVKWEMKKCGLITPLV.

The protein belongs to the plant acyltransferase family. As to expression, highly expressed in flowers. Expressed in leaves.

Functionally, involved in biosynthesis of the epicuticular wax. Plays a role in very-long-chain fatty acid (VLCFA) biosynthesis and is required for VLCFA elongation in leaf. Despite its classification as a BAHD acyltransferase based on sequence homology, CER26L does not seem to share the catalytic mechanism of the members of the BAHD family. This is Protein ECERIFERUM 26-like (CER26L) from Arabidopsis thaliana (Mouse-ear cress).